The sequence spans 106 residues: uncharacterized protein (106 aa).

Positions 1–31 are cleaved as a signal peptide; it reads MNNERLMLKGIFLGAAAGAALSLLHKPTRQA. Residues 57–89 are a coiled coil; the sequence is VITKVDEAKKLARTLSKEVDFVNQQVKELKKTT.

This is an uncharacterized protein from Bacillus subtilis (strain 168).